A 156-amino-acid chain; its full sequence is Acyl carrier protein, mitochondrial (156 aa).

Residues 1–68 constitute a mitochondrion transit peptide; it reads MASRVLCACV…GTVTHLCRQY (68 aa). Residues 77 to 152 form the Carrier domain; it reads DGIKDRVLYV…EIVDYIADKK (76 aa). Lysine 88 carries the post-translational modification N6-acetyllysine. Residue serine 112 is modified to O-(pantetheine 4'-phosphoryl)serine.

This sequence belongs to the acyl carrier protein (ACP) family. As to quaternary structure, mammalian complex I is composed of 45 different subunits. Interacts with ETFRF1. Identified in a complex composed of MALSU1, MIEF1 upstream open reading frame protein and NDUFAB1; within the trimeric complex, MIEF1 upstream open reading frame protein functions as a bridging scaffold that interacts with MALSU1 on one side, and with NDUFAB1 on the other side. The complex interacts with the mitochondrial large ribosomal subunit. Interacts with alpha-1-microglobulin chain; this interaction is required for the maintenance of mitochondrial redox homeostasis. Component of the mitochondrial core iron-sulfur cluster (ISC) complex composed of NFS1, LYRM4, NDUFAB1, ISCU, FXN, and FDX2; this complex is a heterohexamer containing two copies of each monomer. Component of the cyteine desulfurase complex composed of NFS1, LYRM4 and NDUFAB1; this complex contributes to the stability and cysteine desulfurase activity of NFS1. Phosphopantetheinylation at Ser-112 is essential for interactions with LYR motif-containing proteins.

Its subcellular location is the mitochondrion. In terms of biological role, carrier of the growing fatty acid chain in fatty acid biosynthesis. Accessory and non-catalytic subunit of the mitochondrial membrane respiratory chain NADH dehydrogenase (Complex I), which functions in the transfer of electrons from NADH to the respiratory chain. Accessory protein, of the core iron-sulfur cluster (ISC) assembly complex, that regulates, in association with LYRM4, the stability and the cysteine desulfurase activity of NFS1 and participates in the [2Fe-2S] clusters assembly on the scaffolding protein ISCU. The core iron-sulfur cluster (ISC) assembly complex is involved in the de novo synthesis of a [2Fe-2S] cluster, the first step of the mitochondrial iron-sulfur protein biogenesis. This process is initiated by the cysteine desulfurase complex (NFS1:LYRM4:NDUFAB1) that produces persulfide which is delivered on the scaffold protein ISCU in a FXN-dependent manner. Then this complex is stabilized by FDX2 which provides reducing equivalents to accomplish the [2Fe-2S] cluster assembly. Finally, the [2Fe-2S] cluster is transferred from ISCU to chaperone proteins, including HSCB, HSPA9 and GLRX5. This is Acyl carrier protein, mitochondrial from Mus musculus (Mouse).